Reading from the N-terminus, the 333-residue chain is NADH dehydrogenase (ubiquinone) complex I, assembly factor 6 (333 aa).

The N-terminal 44 residues, 1 to 44, are a transit peptide targeting the mitochondrion; sequence MAASTLGSAWGPLRLGVPGLCRRRPPRGLWARARRLSEPVASGR.

It belongs to the NDUFAF6 family.

Its subcellular location is the mitochondrion inner membrane. In terms of biological role, involved in the assembly of mitochondrial NADH:ubiquinone oxidoreductase complex (complex I) at early stages. May play a role in the biogenesis of complex I subunit MT-ND1. The chain is NADH dehydrogenase (ubiquinone) complex I, assembly factor 6 (NDUFAF6) from Bos taurus (Bovine).